Consider the following 240-residue polypeptide: Large ribosomal subunit protein uL2 (240 aa).

A compositionally biased stretch (polar residues) spans 1–11 (MGKRLISQNRG). Disordered regions lie at residues 1 to 28 (MGKR…KGAV) and 206 to 240 (GGGR…TGRK). Composition is skewed to basic residues over residues 13–28 (GTPK…KGAV) and 224–240 (SPGR…TGRK).

This sequence belongs to the universal ribosomal protein uL2 family. Part of the 50S ribosomal subunit. Forms a bridge to the 30S subunit in the 70S ribosome.

One of the primary rRNA binding proteins. Required for association of the 30S and 50S subunits to form the 70S ribosome, for tRNA binding and peptide bond formation. It has been suggested to have peptidyltransferase activity; this is somewhat controversial. Makes several contacts with the 16S rRNA in the 70S ribosome. The sequence is that of Large ribosomal subunit protein uL2 from Methanococcus maripaludis (strain C5 / ATCC BAA-1333).